The sequence spans 500 residues: MKVNYGSPAKSGPLHKNGEFYINKNCFLHPLLFLSEENFYLTDGKRRSHGADANLVFGAWSTVAVKRLIGSVRDPNLNFLKIYDSVSVRNLTDGLDVDLYLHPLLKMTYLILGIALFPKIRAETSSKSKMLQSIHSMFLFLEDRFSKSNHILEADLPHNLHLETLIRLFRRQIKDVSFLHLLRIVFRKRKIFCGKTFYSPGGGQDGSVDIPVRNFYIFEIDSLLLIPWKQVYKFRVNYLSPIDSCNIIRKEIYASAYKFKWNKASIDYSFSRSLWIHYGRWRNKFLIASEGTHYFVKKMLYYLWILLKYHFHYRIKSNEPWIRKLLPTSCVSFLGYTLLAQLVSKNVRIETVTDLYISILGGKKFYPKIPNSIIITTLAKQRFCDFTGRPIGKSAWVTSTDDKIIDGYVQLWQVFSLYYGASMNQYRLRRLIFLLQMSCDSTLAGKHRSTIRLLRCKSNVEALNQILASRKFELSSSRRVWRSSSIRSVLVQFTVLDIGL.

Belongs to the intron maturase 2 family. MatK subfamily.

It is found in the plastid. The protein localises to the chloroplast. Functionally, usually encoded in the trnK tRNA gene intron. Probably assists in splicing its own and other chloroplast group II introns. This chain is Maturase K, found in Adiantum capillus-veneris (Maidenhair fern).